Reading from the N-terminus, the 977-residue chain is MSFYKEKSINETNLGSFVDESNELFFSALSESSMNHGTPDDSILLDLVSRSDNKDLYQDSLDVRDNFSNLSSDEIPQSSSYEQTRKPFFHHFNPFEFLEATSPLQQNGKSRDTEKPPSMKEKDLSSNSSSQHDKAFHERVDQGKNKSSTTKYQEFRTVADYREFSPGQSVNSLKPNSGDEVPSTKSSTSSEMHTQLLKDEQKKILTPAPDVPHDVYCIEPSLGRVFSFPASFVASPLLLEDCNKIASCDLPYSTFYANSQVIDKFSEYFAYVDQDPCHIRVLNANTDQSLILYTQSDVKNLHFGKNKHTKPHLLVMDALSNLYVWKILQKRSEISVSLLFTIRRANYGICDWIPNSSNMFSMIVKNSLYIVDISNIRSNNISPKVYAKDFNGLQAAKVDLPGPINSYTISSDRSVVAILVNSQIFFYSFPVSNLFSTNPSHRGNWAAIATMSLQLPSTANSISFLSSPPNNNDIIDKVICVSYANNTILGLFDFGLCAFTQEIEFSNEKEKSPIQQLLTFNNSNMIVAKRNQLLDIFIYSPSDLSNVGVLSNTAALISAVSKGKRFGDSGYINKVISNEVVDHSIVFVTLIGCDSSKLELILALSSGYFQFCIESDSKFDEGTSLEYPNSDKRILARASLTSGLKSNNTLRALSQDLKNCAKSKDDSTTQNLTESLGSVCYPSMPFFNQYVPQNPNEVRENISSVMKSRIHAKFESLHSRVELVVKNSYMKLLEQTISEAATDEISDLFKLIHSKPFLLEVGFLETGFLANDLENLTSTYRSSNRQLCDFSNRIGNINQKLEKLLMIERLETSDQSPTSSSNFEESESFAVSKKVLELVRISKNKEALICFTKDPSIEAFRSLQDVPDYSLDDCSSIHLLAFIHVLSKLIIKEEQLSFSRLQLLSRATSRLRTMTLSVFNNSGTLTPELFSSVVRIVLKNVREFVLIGNSSIQKSKHEFLITTLQALLREVDIFLNT.

A disordered region spans residues 100–152 (ATSPLQQNGKSRDTEKPPSMKEKDLSSNSSSQHDKAFHERVDQGKNKSSTTKY). Composition is skewed to basic and acidic residues over residues 109–124 (KSRD…EKDL) and 131–144 (QHDK…DQGK). At serine 165 the chain carries Phosphoserine. Polar residues-rich tracts occupy residues 166–175 (PGQSVNSLKP) and 183–193 (STKSSTSSEMH). A disordered region spans residues 166 to 194 (PGQSVNSLKPNSGDEVPSTKSSTSSEMHT).

This is an uncharacterized protein from Schizosaccharomyces pombe (strain 972 / ATCC 24843) (Fission yeast).